Here is a 218-residue protein sequence, read N- to C-terminus: Acetoacetyl-CoA:acetate/butyrate CoA transferase alpha subunit (218 aa).

24–30 (GGFLNCG) provides a ligand contact to CoA.

This sequence belongs to the 3-oxoacid CoA-transferase subunit A family. Heterotetramer composed of two alpha subunits (CtfA) and two beta subunits (CtfB).

It carries out the reaction acetoacetate + butanoyl-CoA = acetoacetyl-CoA + butanoate. The catalysed reaction is acetoacetate + acetyl-CoA = acetoacetyl-CoA + acetate. With respect to regulation, the acetate and butyrate conversion reactions are inhibited in vitro by physiological levels of acetone and butanol. Catalyzes the transfer of CoA from acetoacetyl-CoA to acetate, butyrate and propionate. Also shows low activity with valerate, isobutyrate and crotonate. Plays an important role in the metabolic shift between the acid-producing and solvent-forming states of C.acetobutylicum. Acts mainly to detoxify the medium by removing the acetate and butyrate excreted earlier in the fermentation. This Clostridium acetobutylicum (strain ATCC 824 / DSM 792 / JCM 1419 / IAM 19013 / LMG 5710 / NBRC 13948 / NRRL B-527 / VKM B-1787 / 2291 / W) protein is Acetoacetyl-CoA:acetate/butyrate CoA transferase alpha subunit.